Consider the following 297-residue polypeptide: Aspartate carbamoyltransferase catalytic subunit (297 aa).

2 residues coordinate carbamoyl phosphate: Arg52 and Thr53. Lys80 contacts L-aspartate. Positions 102, 130, and 133 each coordinate carbamoyl phosphate. L-aspartate is bound by residues Arg167 and Arg217. Carbamoyl phosphate is bound by residues Gly256 and Pro257.

The protein belongs to the aspartate/ornithine carbamoyltransferase superfamily. ATCase family. Heterododecamer (2C3:3R2) of six catalytic PyrB chains organized as two trimers (C3), and six regulatory PyrI chains organized as three dimers (R2).

The catalysed reaction is carbamoyl phosphate + L-aspartate = N-carbamoyl-L-aspartate + phosphate + H(+). The protein operates within pyrimidine metabolism; UMP biosynthesis via de novo pathway; (S)-dihydroorotate from bicarbonate: step 2/3. Functionally, catalyzes the condensation of carbamoyl phosphate and aspartate to form carbamoyl aspartate and inorganic phosphate, the committed step in the de novo pyrimidine nucleotide biosynthesis pathway. This Helicobacter hepaticus (strain ATCC 51449 / 3B1) protein is Aspartate carbamoyltransferase catalytic subunit.